Consider the following 513-residue polypeptide: Calcium-dependent protein kinase 24 (513 aa).

The segment at 1–33 (MQPDPSGSGGDGNANAKAKLAPPPVTAAGGRPV) is disordered. The region spanning 47 to 305 (YRIGKKLGQG…AHEVLCHPWI (259 aa)) is the Protein kinase domain. ATP is bound by residues 53–61 (LGQGQFGTT) and lysine 76. The active-site Proton acceptor is aspartate 171. An autoinhibitory domain region spans residues 311 to 341 (APDKPIDSAVLSRLKHFSAMNKLKKMALRVI). 4 consecutive EF-hand domains span residues 348–383 (EEIG…VGSE), 384–419 (LTEH…MNKL), 420–455 (EREE…FGLD), and 458–489 (HLED…GNAG). The Ca(2+) site is built by aspartate 361, aspartate 363, serine 365, threonine 367, glutamate 372, aspartate 397, aspartate 399, serine 401, threonine 403, glutamate 408, aspartate 433, aspartate 435, serine 437, glutamate 444, aspartate 467, asparagine 469, aspartate 471, glutamine 473, and glutamate 478.

Belongs to the protein kinase superfamily. Ser/Thr protein kinase family. CDPK subfamily. In terms of tissue distribution, expressed in roots.

It is found in the cytoplasm. It catalyses the reaction L-seryl-[protein] + ATP = O-phospho-L-seryl-[protein] + ADP + H(+). It carries out the reaction L-threonyl-[protein] + ATP = O-phospho-L-threonyl-[protein] + ADP + H(+). With respect to regulation, activated by calcium. Autophosphorylation may play an important role in the regulation of the kinase activity. In terms of biological role, may play a role in signal transduction pathways that involve calcium as a second messenger. Possesses calcium-dependent protein kinase activity in vitro. This is Calcium-dependent protein kinase 24 from Oryza sativa subsp. japonica (Rice).